The following is a 498-amino-acid chain: ATP synthase subunit beta, chloroplastic (498 aa).

Glycine 172–threonine 179 provides a ligand contact to ATP.

This sequence belongs to the ATPase alpha/beta chains family. As to quaternary structure, F-type ATPases have 2 components, CF(1) - the catalytic core - and CF(0) - the membrane proton channel. CF(1) has five subunits: alpha(3), beta(3), gamma(1), delta(1), epsilon(1). CF(0) has four main subunits: a(1), b(1), b'(1) and c(9-12).

The protein resides in the plastid. The protein localises to the chloroplast thylakoid membrane. The catalysed reaction is ATP + H2O + 4 H(+)(in) = ADP + phosphate + 5 H(+)(out). In terms of biological role, produces ATP from ADP in the presence of a proton gradient across the membrane. The catalytic sites are hosted primarily by the beta subunits. The sequence is that of ATP synthase subunit beta, chloroplastic from Balaka seemannii.